The chain runs to 255 residues: NAD(P)H-quinone oxidoreductase subunit K, chloroplastic (255 aa).

[4Fe-4S] cluster-binding residues include Cys-47, Cys-48, Cys-112, and Cys-143.

It belongs to the complex I 20 kDa subunit family. In terms of assembly, NDH is composed of at least 16 different subunits, 5 of which are encoded in the nucleus. [4Fe-4S] cluster is required as a cofactor.

The protein resides in the plastid. It is found in the chloroplast thylakoid membrane. The catalysed reaction is a plastoquinone + NADH + (n+1) H(+)(in) = a plastoquinol + NAD(+) + n H(+)(out). It catalyses the reaction a plastoquinone + NADPH + (n+1) H(+)(in) = a plastoquinol + NADP(+) + n H(+)(out). In terms of biological role, NDH shuttles electrons from NAD(P)H:plastoquinone, via FMN and iron-sulfur (Fe-S) centers, to quinones in the photosynthetic chain and possibly in a chloroplast respiratory chain. The immediate electron acceptor for the enzyme in this species is believed to be plastoquinone. Couples the redox reaction to proton translocation, and thus conserves the redox energy in a proton gradient. This Zygnema circumcarinatum (Green alga) protein is NAD(P)H-quinone oxidoreductase subunit K, chloroplastic.